A 428-amino-acid polypeptide reads, in one-letter code: RNA-binding protein 34 (428 aa).

Disordered stretches follow at residues 1-106 (MALR…KVKV) and 127-152 (DLEE…TDGE). Lys147 carries the post-translational modification N6-acetyllysine. RRM domains are found at residues 183–278 (RTVF…LASE) and 285–362 (RSVF…RSVN). Residue Lys240 forms a Glycyl lysine isopeptide (Lys-Gly) (interchain with G-Cter in SUMO2) linkage. The residue at position 286 (Ser286) is a Phosphoserine. Positions 361 to 428 (VNKEKLKQQN…GQTKKPRKQK (68 aa)) are disordered. The segment covering 408–428 (LMKKKKGQKKKGQTKKPRKQK) has biased composition (basic residues).

The protein belongs to the RRM RBM34 family.

Its subcellular location is the nucleus. The protein resides in the nucleolus. The sequence is that of RNA-binding protein 34 (Rbm34) from Rattus norvegicus (Rat).